The chain runs to 493 residues: D-glyceraldehyde dehydrogenase (NADP(+)) (493 aa).

A coiled-coil region spans residues 70-92 (RAKELIEKNRAELENIIMEENGK). NADP(+)-binding positions include 146–149 (TPWN), Arg-157, 172–176 (KPSSD), 204–210 (RGSEIGD), 225–248 (GSTATGQRIMQKASANMAKLILEL), Cys-281, and 381–383 (EIF). Substrate contacts are provided by Asn-149 and Arg-157. Glu-247 acts as the Proton acceptor in catalysis. Cys-281 is a binding site for substrate. The active-site Proton donor is the Cys-281.

Belongs to the aldehyde dehydrogenase family. Glyceraldehyde dehydrogenase subfamily. Homotetramer. Dimer of dimers.

The enzyme catalyses D-glyceraldehyde + NADP(+) + H2O = (R)-glycerate + NADPH + 2 H(+). The protein operates within carbohydrate degradation; glycolysis. Inhibited by calcium, cadmium, copper and mercury ions. Stable for 2 hours at 60 degrees Celsius but activity is decreased to less than 50 percent within 20 minutes at 80 degrees Celsius. Two folds activity enhancement in the presence of 1 mM glutathione, DTT, or 2-mercaptoethanol. Complete activity inhibition by thiol-modifying reagents such as p-chloromercuribenzoic acid or p-hydroxy-mercuribenzoic acid. In terms of biological role, NADP-dependent dehydrogenase of the nED (non-phosphorylated Entner-Doudoroff) pathway with highest activity towards glyceraldehydes (e.g. D,L-glyceraldehyde and D-glyceraldehyde), to a lesser extent towards D,L-glyceraldehyde-3-phosphate and glycolaldehyde, but no activity towards aliphatic or aromatic aldehydes. This is D-glyceraldehyde dehydrogenase (NADP(+)) from Thermoplasma acidophilum (strain ATCC 25905 / DSM 1728 / JCM 9062 / NBRC 15155 / AMRC-C165).